Reading from the N-terminus, the 294-residue chain is Release factor glutamine methyltransferase (294 aa).

S-adenosyl-L-methionine contacts are provided by E148 and N201. Residue 201–204 (NPPY) coordinates substrate.

Belongs to the protein N5-glutamine methyltransferase family. PrmC subfamily.

The catalysed reaction is L-glutaminyl-[peptide chain release factor] + S-adenosyl-L-methionine = N(5)-methyl-L-glutaminyl-[peptide chain release factor] + S-adenosyl-L-homocysteine + H(+). Functionally, methylates the class 1 translation termination release factors RF1/PrfA and RF2/PrfB on the glutamine residue of the universally conserved GGQ motif. In Bifidobacterium longum (strain NCC 2705), this protein is Release factor glutamine methyltransferase.